A 209-amino-acid chain; its full sequence is Guanylate kinase (209 aa).

Residues 9-188 enclose the Guanylate kinase-like domain; it reads GIMLVMSSPS…SVQQIKSIFI (180 aa). Residue 16–23 coordinates ATP; the sequence is SPSGGGKT.

It belongs to the guanylate kinase family.

The protein localises to the cytoplasm. It catalyses the reaction GMP + ATP = GDP + ADP. Functionally, essential for recycling GMP and indirectly, cGMP. The protein is Guanylate kinase of Ehrlichia ruminantium (strain Gardel).